A 441-amino-acid polypeptide reads, in one-letter code: D-inositol 3-phosphate glycosyltransferase (441 aa).

1D-myo-inositol 3-phosphate is bound at residue His-38. UDP-N-acetyl-alpha-D-glucosamine contacts are provided by residues 44 to 45 (QP) and Gly-52. Residues 49-54 (DAGGMN), Lys-107, Tyr-140, Thr-164, and Arg-184 each bind 1D-myo-inositol 3-phosphate. UDP-N-acetyl-alpha-D-glucosamine-binding residues include Arg-258, Lys-263, and Gln-316. Mg(2+) is bound by residues Phe-325, Gln-326, and Ala-328. UDP-N-acetyl-alpha-D-glucosamine contacts are provided by Glu-338 and Glu-346. Thr-352 is a binding site for Mg(2+).

It belongs to the glycosyltransferase group 1 family. MshA subfamily. As to quaternary structure, homodimer.

It catalyses the reaction 1D-myo-inositol 3-phosphate + UDP-N-acetyl-alpha-D-glucosamine = 1D-myo-inositol 2-acetamido-2-deoxy-alpha-D-glucopyranoside 3-phosphate + UDP + H(+). Its function is as follows. Catalyzes the transfer of a N-acetyl-glucosamine moiety to 1D-myo-inositol 3-phosphate to produce 1D-myo-inositol 2-acetamido-2-deoxy-glucopyranoside 3-phosphate in the mycothiol biosynthesis pathway. This is D-inositol 3-phosphate glycosyltransferase from Mycolicibacterium paratuberculosis (strain ATCC BAA-968 / K-10) (Mycobacterium paratuberculosis).